We begin with the raw amino-acid sequence, 382 residues long: Pyrimidine monooxygenase RutA (382 aa).

FMN is bound by residues 68 to 69, Asn134, Glu143, 159 to 160, and Ser209; these read IK and RY.

The protein belongs to the NtaA/SnaA/DszA monooxygenase family. RutA subfamily.

The catalysed reaction is uracil + FMNH2 + NADH + O2 = (Z)-3-ureidoacrylate + FMN + NAD(+) + H2O + H(+). The enzyme catalyses thymine + FMNH2 + NADH + O2 = (Z)-2-methylureidoacrylate + FMN + NAD(+) + H2O + H(+). In terms of biological role, catalyzes the pyrimidine ring opening between N-3 and C-4 by an unusual flavin hydroperoxide-catalyzed mechanism, adding oxygen atoms in the process to yield ureidoacrylate peracid, that immediately reacts with FMN forming ureidoacrylate and FMN-N(5)-oxide. The FMN-N(5)-oxide reacts spontaneously with NADH to produce FMN. Requires the flavin reductase RutF to regenerate FMN in vivo. This Escherichia coli O55:H7 (strain CB9615 / EPEC) protein is Pyrimidine monooxygenase RutA.